The primary structure comprises 323 residues: L-lactate dehydrogenase (323 aa).

NAD(+) contacts are provided by Val-11, Asp-32, and Tyr-63. Residues Gln-80 and Arg-86 each contribute to the substrate site. NAD(+)-binding positions include Ser-99, 116 to 118 (VSN), and Ser-141. Substrate is bound at residue 118–121 (NPVD). 146-149 (DTAR) lines the substrate pocket. Beta-D-fructose 1,6-bisphosphate-binding residues include Arg-151 and His-166. The Proton acceptor role is filled by His-173. A Phosphotyrosine modification is found at Tyr-221. A substrate-binding site is contributed by Thr-230.

The protein belongs to the LDH/MDH superfamily. LDH family. As to quaternary structure, homotetramer.

The protein resides in the cytoplasm. It catalyses the reaction (S)-lactate + NAD(+) = pyruvate + NADH + H(+). It participates in fermentation; pyruvate fermentation to lactate; (S)-lactate from pyruvate: step 1/1. Allosterically activated by fructose 1,6-bisphosphate (FBP). In terms of biological role, catalyzes the conversion of lactate to pyruvate. This chain is L-lactate dehydrogenase, found in Kosmotoga olearia (strain ATCC BAA-1733 / DSM 21960 / TBF 19.5.1).